The primary structure comprises 116 residues: MRRLAILLSLAGIADSSYLLLSEAVPCPTGVCASISVFSLPPFVPALLGLCWFVLSIVVFTAGVNRALLTFWRFSGVFGESFLGTYAVLHGYFCPYCFTAYGIGIVVVAISEKLYG.

Transmembrane regions (helical) follow at residues 5–27 (AILL…AVPC), 42–64 (PFVP…TAGV), and 88–110 (VLHG…VVAI).

The protein resides in the cell membrane. This is an uncharacterized protein from Archaeoglobus fulgidus (strain ATCC 49558 / DSM 4304 / JCM 9628 / NBRC 100126 / VC-16).